Here is a 42-residue protein sequence, read N- to C-terminus: Conotoxin Au11.6 (42 aa).

4 cysteine pairs are disulfide-bonded: cysteine 6–cysteine 20, cysteine 13–cysteine 25, cysteine 19–cysteine 30, and cysteine 24–cysteine 37.

This sequence belongs to the conotoxin I1 superfamily. In terms of tissue distribution, expressed by the venom duct.

The protein resides in the secreted. This chain is Conotoxin Au11.6, found in Conus aulicus (Princely cone).